The primary structure comprises 380 residues: MKKIILLGATGSIGTQTLTIIRENPEKFQLVAFSFGRNIERGRAIIQEFKPKMVAVWHTRDRVTLESEFPDVKFFNGLDGLREVATYLDGDVLLNAVMGSVGLLPTLDAIEAGKAIAIANKETLVTAGHLVMQAAKEKNISLLPVDSEHSAILQALNGENRERIEKIILTASGGSFRDKTREQLSEVTVKEALKHPNWNMGNKLTIDSATMFNKGLEVMEAHWLFGVDYDDIEVVIQRESIVHSMVQFVDGSFIAQLGTPDMRMPIQYALTYPDRLSIPYEKEFRITDFSALHFEEVNYERFPALKLAYNAGKIGGTMPTVLNAANEIAVAGFLNGQVAFYNIEALVENAMNRHTSISNPNLDTILQVDQETRAYVKTLL.

The NADPH site is built by T10, G11, S12, I13, G36, R37, N38, and N120. K121 is a binding site for 1-deoxy-D-xylulose 5-phosphate. E122 contacts NADPH. Residue D146 participates in Mn(2+) binding. 1-deoxy-D-xylulose 5-phosphate contacts are provided by S147, E148, S172, and H195. E148 lines the Mn(2+) pocket. Residue G201 coordinates NADPH. Positions 208, 213, 214, and 217 each coordinate 1-deoxy-D-xylulose 5-phosphate. Mn(2+) is bound at residue E217.

The protein belongs to the DXR family. The cofactor is Mg(2+). Mn(2+) serves as cofactor.

The enzyme catalyses 2-C-methyl-D-erythritol 4-phosphate + NADP(+) = 1-deoxy-D-xylulose 5-phosphate + NADPH + H(+). Its pathway is isoprenoid biosynthesis; isopentenyl diphosphate biosynthesis via DXP pathway; isopentenyl diphosphate from 1-deoxy-D-xylulose 5-phosphate: step 1/6. In terms of biological role, catalyzes the NADPH-dependent rearrangement and reduction of 1-deoxy-D-xylulose-5-phosphate (DXP) to 2-C-methyl-D-erythritol 4-phosphate (MEP). The polypeptide is 1-deoxy-D-xylulose 5-phosphate reductoisomerase (Listeria innocua serovar 6a (strain ATCC BAA-680 / CLIP 11262)).